Consider the following 319-residue polypeptide: N-acetyllactosaminide alpha-1,3-galactosyltransferase-like 1 (319 aa).

Residues 1 to 6 (MQYKKE) are Cytoplasmic-facing. Residues 7–26 (ALLLMLFAVLLALTQRFSYS) traverse the membrane as a helical; Signal-anchor for type II membrane protein segment. Topologically, residues 27 to 319 (RTKDHLQKMY…IKHIKIAWKP (293 aa)) are lumenal. N-linked (GlcNAc...) asparagine glycosylation is found at asparagine 89 and asparagine 101. Substrate is bound by residues 97-102 (FATGNF), 188-190 (AVN), and 210-213 (HAWW). The active-site Nucleophile is the glutamate 278.

It belongs to the glycosyltransferase 6 family. It depends on Mn(2+) as a cofactor.

The protein localises to the golgi apparatus. Its subcellular location is the golgi stack membrane. The catalysed reaction is a beta-D-galactosyl-(1-&gt;4)-N-acetyl-beta-D-glucosaminyl derivative + UDP-alpha-D-galactose = an alpha-D-galactosyl-(1-&gt;3)-beta-D-galactosyl-(1-&gt;4)-N-acetyl-beta-D-glucosaminyl derivative + UDP + H(+). It functions in the pathway protein modification; protein glycosylation. Its function is as follows. Synthesizes the galactose-alpha(1,3)-galactose group by catalyzing the transfer of a galactose residue, with an alpha-1,3 linkage, on terminal lactosaminide (Gal-beta-1,4-GlcNAc-R) disaccharide borne by a glycoprotein or a glycolipid. The polypeptide is N-acetyllactosaminide alpha-1,3-galactosyltransferase-like 1 (Ggta1l1) (Mus musculus (Mouse)).